A 505-amino-acid chain; its full sequence is Glycerol kinase (505 aa).

Thr-12 provides a ligand contact to ADP. ATP-binding residues include Thr-12, Thr-13, and Ser-14. Residue Thr-12 coordinates sn-glycerol 3-phosphate. Arg-16 serves as a coordination point for ADP. Sn-glycerol 3-phosphate-binding residues include Arg-82, Glu-83, Tyr-134, and Asp-249. Positions 82, 83, 134, 249, and 250 each coordinate glycerol. Positions 271 and 315 each coordinate ADP. Residues Thr-271, Gly-315, Gln-319, and Gly-416 each contribute to the ATP site. Residues Gly-416 and Asn-420 each coordinate ADP.

The protein belongs to the FGGY kinase family.

The catalysed reaction is glycerol + ATP = sn-glycerol 3-phosphate + ADP + H(+). It participates in polyol metabolism; glycerol degradation via glycerol kinase pathway; sn-glycerol 3-phosphate from glycerol: step 1/1. Inhibited by fructose 1,6-bisphosphate (FBP). Its function is as follows. Key enzyme in the regulation of glycerol uptake and metabolism. Catalyzes the phosphorylation of glycerol to yield sn-glycerol 3-phosphate. In Mycolicibacterium gilvum (strain PYR-GCK) (Mycobacterium gilvum (strain PYR-GCK)), this protein is Glycerol kinase.